Reading from the N-terminus, the 157-residue chain is N-acetylgalactosamine-specific phosphotransferase enzyme IIB component 2 (157 aa).

One can recognise a PTS EIIB type-4 domain in the interval 1–157; that stretch reads MPNIVLSRID…EPAVDLFKLL (157 aa). The active-site Pros-phosphohistidine intermediate is the histidine 15.

Its subcellular location is the cytoplasm. In terms of biological role, the phosphoenolpyruvate-dependent sugar phosphotransferase system (sugar PTS), a major carbohydrate active -transport system, catalyzes the phosphorylation of incoming sugar substrates concomitantly with their translocation across the cell membrane. This system is involved in N-acetylgalactosamine transport. In Escherichia coli (strain K12), this protein is N-acetylgalactosamine-specific phosphotransferase enzyme IIB component 2 (agaV).